Consider the following 374-residue polypeptide: Queuine tRNA-ribosyltransferase (374 aa).

D89 (proton acceptor) is an active-site residue. Substrate contacts are provided by residues 89-93 (DSGGF), D143, Q187, and G214. Positions 245–251 (GVGKPED) are RNA binding. D264 acts as the Nucleophile in catalysis. Residues 269-273 (TRNAR) form an RNA binding; important for wobble base 34 recognition region. Zn(2+)-binding residues include C302, C304, C307, and H333.

This sequence belongs to the queuine tRNA-ribosyltransferase family. Homodimer. Within each dimer, one monomer is responsible for RNA recognition and catalysis, while the other monomer binds to the replacement base PreQ1. Zn(2+) is required as a cofactor.

The enzyme catalyses 7-aminomethyl-7-carbaguanine + guanosine(34) in tRNA = 7-aminomethyl-7-carbaguanosine(34) in tRNA + guanine. It participates in tRNA modification; tRNA-queuosine biosynthesis. Its function is as follows. Catalyzes the base-exchange of a guanine (G) residue with the queuine precursor 7-aminomethyl-7-deazaguanine (PreQ1) at position 34 (anticodon wobble position) in tRNAs with GU(N) anticodons (tRNA-Asp, -Asn, -His and -Tyr). Catalysis occurs through a double-displacement mechanism. The nucleophile active site attacks the C1' of nucleotide 34 to detach the guanine base from the RNA, forming a covalent enzyme-RNA intermediate. The proton acceptor active site deprotonates the incoming PreQ1, allowing a nucleophilic attack on the C1' of the ribose to form the product. After dissociation, two additional enzymatic reactions on the tRNA convert PreQ1 to queuine (Q), resulting in the hypermodified nucleoside queuosine (7-(((4,5-cis-dihydroxy-2-cyclopenten-1-yl)amino)methyl)-7-deazaguanosine). This is Queuine tRNA-ribosyltransferase from Shewanella loihica (strain ATCC BAA-1088 / PV-4).